We begin with the raw amino-acid sequence, 452 residues long: Probable ECA polymerase (452 aa).

Transmembrane regions (helical) follow at residues 6-26, 37-57, 63-83, 118-138, 155-175, 181-201, 207-227, 228-248, 341-361, 378-398, and 410-430; these read FSGL…LTWF, VFFS…TSVL, VGVA…CFYG, VILM…NGFL, GVAL…VYFL, AWLF…MIVG, IIIA…ISLW, MLAA…LKRY, LVVM…GLII, YKAA…IVLV, and VFFL…FWLF.

It belongs to the WzyE family. As to quaternary structure, probably part of a complex composed of WzxE, WzyE and WzzE.

The protein resides in the cell inner membrane. The protein operates within bacterial outer membrane biogenesis; enterobacterial common antigen biosynthesis. Probably involved in the polymerization of enterobacterial common antigen (ECA) trisaccharide repeat units. The protein is Probable ECA polymerase of Salmonella gallinarum (strain 287/91 / NCTC 13346).